The primary structure comprises 426 residues: Histidine--tRNA ligase (426 aa).

It belongs to the class-II aminoacyl-tRNA synthetase family. In terms of assembly, homodimer.

The protein localises to the cytoplasm. It catalyses the reaction tRNA(His) + L-histidine + ATP = L-histidyl-tRNA(His) + AMP + diphosphate + H(+). This is Histidine--tRNA ligase from Streptococcus sanguinis (strain SK36).